The chain runs to 345 residues: tRNA pseudouridine synthase B (345 aa).

Residue D39 is the Nucleophile of the active site.

It belongs to the pseudouridine synthase TruB family. Type 1 subfamily.

The enzyme catalyses uridine(55) in tRNA = pseudouridine(55) in tRNA. In terms of biological role, responsible for synthesis of pseudouridine from uracil-55 in the psi GC loop of transfer RNAs. The polypeptide is tRNA pseudouridine synthase B (Rickettsia peacockii (strain Rustic)).